The sequence spans 118 residues: NADH-ubiquinone oxidoreductase chain 3 (118 aa).

The next 2 membrane-spanning stretches (helical) occupy residues 7–27 (ICIY…LPFL) and 87–107 (IDPF…IGSL).

This sequence belongs to the complex I subunit 3 family.

It localises to the mitochondrion membrane. It catalyses the reaction a ubiquinone + NADH + 5 H(+)(in) = a ubiquinol + NAD(+) + 4 H(+)(out). Functionally, core subunit of the mitochondrial membrane respiratory chain NADH dehydrogenase (Complex I) that is believed to belong to the minimal assembly required for catalysis. Complex I functions in the transfer of electrons from NADH to the respiratory chain. The immediate electron acceptor for the enzyme is believed to be ubiquinone. The sequence is that of NADH-ubiquinone oxidoreductase chain 3 (ND3) from Solanum tuberosum (Potato).